The primary structure comprises 349 residues: Probable protease SohB (349 aa).

At 1–8 (MELLSEYG) the chain is on the periplasmic side. A helical membrane pass occupies residues 9–29 (LFLAKIVTVVLAIAAIAAIIV). Residues 30–349 (NVAQRNKRQR…WWQRGQKPLM (320 aa)) are Cytoplasmic-facing. The active-site Nucleophile is serine 178. Catalysis depends on lysine 230, which acts as the Proton donor/acceptor.

Belongs to the peptidase S49 family.

The protein resides in the cell inner membrane. Multicopy suppressor of the HtrA (DegP) null phenotype. It is possibly a protease, not essential for bacterial viability. The sequence is that of Probable protease SohB (sohB) from Escherichia coli (strain K12).